The chain runs to 361 residues: Mitogen-activated protein kinase 14B (361 aa).

The Protein kinase domain occupies 25–309; the sequence is YQNLSPVGSG…ASQALAHPYF (285 aa). Residues 31-39 and Lys-54 contribute to the ATP site; that span reads VGSGAYGSV. The Proton acceptor role is filled by Asp-151. The residue at position 181 (Thr-181) is a Phosphothreonine; by MAP2K6. Residues 181–183 carry the TXY motif; sequence TGY. Tyr-183 bears the Phosphotyrosine; by MAP2K6 mark.

Belongs to the protein kinase superfamily. CMGC Ser/Thr protein kinase family. MAP kinase subfamily. Mg(2+) serves as cofactor. Post-translationally, dually phosphorylated on Thr-181 and Tyr-183, which activates the enzyme. Predominantly expressed in the ovary. Lower levels present in brain, gill, heart, spleen, kidney, muscle and gut.

Its subcellular location is the cytoplasm. It is found in the nucleus. It catalyses the reaction L-seryl-[protein] + ATP = O-phospho-L-seryl-[protein] + ADP + H(+). The enzyme catalyses L-threonyl-[protein] + ATP = O-phospho-L-threonyl-[protein] + ADP + H(+). Its activity is regulated as follows. Activated by threonine and tyrosine phosphorylation by the dual specificity kinase, MKK6. Serine/threonine kinase which acts as an essential component of the MAP kinase signal transduction pathway. Mapk14b is one of the four p38 MAPKs which play an important role in the cascades of cellular responses evoked by extracellular stimuli such as pro-inflammatory cytokines or physical stress leading to direct activation of transcription factors. Accordingly, p38 MAPKs phosphorylate a broad range of proteins and it has been estimated that they may have approximately 200 to 300 substrates each. Some of the targets are downstream kinases which are activated through phosphorylation and further phosphorylate additional targets. This is Mitogen-activated protein kinase 14B (mapk14b) from Cyprinus carpio (Common carp).